The sequence spans 276 residues: Large ribosomal subunit protein uL2c (276 aa).

The tract at residues 225–276 is disordered; that stretch reads AMNPVDHPHGGGEGRTPIGRKKPVTPWGYSALGKKSRKRNRYSDASILRRRE.

This sequence belongs to the universal ribosomal protein uL2 family. In terms of assembly, part of the 50S ribosomal subunit.

It localises to the plastid. It is found in the chloroplast. This is Large ribosomal subunit protein uL2c (rpl2) from Pinus koraiensis (Korean pine).